Here is a 342-residue protein sequence, read N- to C-terminus: Phosphate acyltransferase (342 aa).

This sequence belongs to the PlsX family. In terms of assembly, homodimer. Probably interacts with PlsY.

Its subcellular location is the cytoplasm. The enzyme catalyses a fatty acyl-[ACP] + phosphate = an acyl phosphate + holo-[ACP]. Its pathway is lipid metabolism; phospholipid metabolism. Functionally, catalyzes the reversible formation of acyl-phosphate (acyl-PO(4)) from acyl-[acyl-carrier-protein] (acyl-ACP). This enzyme utilizes acyl-ACP as fatty acyl donor, but not acyl-CoA. This Leuconostoc mesenteroides subsp. mesenteroides (strain ATCC 8293 / DSM 20343 / BCRC 11652 / CCM 1803 / JCM 6124 / NCDO 523 / NBRC 100496 / NCIMB 8023 / NCTC 12954 / NRRL B-1118 / 37Y) protein is Phosphate acyltransferase.